Reading from the N-terminus, the 1195-residue chain is Voltage-gated inwardly rectifying potassium channel KCNH7 (1195 aa).

The Cytoplasmic segment spans residues Met1–Trp412. The 30-residue stretch at Ile41–His70 folds into the PAS domain. The PAC domain maps to Arg92 to Val144. Residue Ser174 is modified to Phosphoserine. The disordered stretch occupies residues Ser194–Thr216. Ser238 and Ser319 each carry phosphoserine. Residues Leu413 to Leu433 form a helical membrane-spanning segment. Residues Asn434–Ser449 lie on the Extracellular side of the membrane. The chain crosses the membrane as a helical span at residues Pro450–Phe470. Residues Arg471 to Lys494 are Cytoplasmic-facing. The helical transmembrane segment at Gly495–Gly515 threads the bilayer. The Extracellular segment spans residues Ser516–Thr521. A helical; Voltage-sensor transmembrane segment spans residues Leu522–Asp542. Residues Arg543–Ala549 are Cytoplasmic-facing. A helical membrane pass occupies residues Ala550–Trp570. The Extracellular segment spans residues Tyr571–Tyr614. N-linked (GlcNAc...) asparagine glycosylation occurs at Asn600. The pore-forming intramembrane region spans Val615 to Pro635. A Selectivity filter motif is present at residues Ser627–Asn632. The Extracellular segment spans residues Asn636–Lys641. A helical membrane pass occupies residues Ile642–Val662. The Cytoplasmic segment spans residues Ser663–Lys1195. The tract at residues Ala745 to Leu845 is cNMP-binding domain. Residues Ala870–Thr915 form a disordered region. Over residues Leu890 to Lys902 the composition is skewed to basic and acidic residues. Ser891 and Ser894 each carry phosphoserine. A coiled-coil region spans residues Tyr1027 to Ala1054.

This sequence belongs to the potassium channel family. H (Eag) (TC 1.A.1.20) subfamily. Kv11.3/KCNH7 sub-subfamily. As to quaternary structure, the potassium channel is probably composed of a homo- or heterotetrameric complex of pore-forming alpha subunits that can associate only within their subfamily.

The protein localises to the cell membrane. The enzyme catalyses K(+)(in) = K(+)(out). In terms of biological role, pore-forming (alpha) subunit of voltage-gated inwardly rectifying potassium channel. Exhibits faster activation and deactivation kinetics and slow inactivation at membrane potentials positive to 240 mV, resulting in the weakest inward rectification. The protein is Voltage-gated inwardly rectifying potassium channel KCNH7 of Mus musculus (Mouse).